A 1285-amino-acid polypeptide reads, in one-letter code: Replicase polyprotein 1TF (1285 aa).

Residues 8–28 (CMCTPAARVFWNAGQVFCTRC) form a C4-type; atypical zinc finger. One can recognise a Peptidase C31 domain in the interval 69–180 (ECTPSGCCWL…QPFCPFEEAH (112 aa)). The tract at residues 69 to 182 (ECTPSGCCWL…FCPFEEAHSS (114 aa)) is PCP1-alpha. Catalysis depends on for Nsp1-alpha papain-like cysteine proteinase activity residues Cys-76 and His-146. Residues 269 to 384 (PDVFDGKCWL…IFRFGAHKWY (116 aa)) are PCP1-beta. In terms of domain architecture, Peptidase C32 spans 269–385 (PDVFDGKCWL…FRFGAHKWYG (117 aa)). Catalysis depends on for Nsp1-beta papain-like cysteine proteinase activity residues Cys-276 and His-345. 2 disordered regions span residues 752–797 (PSDP…DAGA) and 1050–1088 (KPVGPVLDQIVPPPTDIQQEDVTPSDGPPHAPDFPSRVS). Positions 775-790 (APASTTTLVREQTPDN) are enriched in polar residues. 4 helical membrane-spanning segments follow: residues 1136-1156 (LWLQVIGCLQVSFYLLSCSVV), 1170-1190 (FLVLCGVFVWVFLVLGWLLLY), 1211-1231 (VMLSFWLLSSANFGNLCAALW), and 1250-1270 (VISGMFSYVYACLQIWPFLLF).

The protein resides in the host nucleus. It localises to the host cytoplasm. Its subcellular location is the host membrane. Functionally, inhibits host IFN-beta production. Plays a role in the degradation of the host transcriptional activator CREBBP protein. The degradation of host CREBBP which is a key component of the IFN enhanceosome is likely responsible for the inhibition of interferon mediated by Nsp1-alpha. Also participates in the inhibition of host NF-kappa-B activation. In terms of biological role, plays a role in the inhibition of the interferon-activated JAK/STAT signal transduction by mediating the ubiquitination and subsequent proteasomal degradation of host KPNA1. Plays a role in viral replication. The sequence is that of Replicase polyprotein 1TF from Porcine reproductive and respiratory syndrome virus (strain Lelystad) (PRRSV).